Here is a 325-residue protein sequence, read N- to C-terminus: Apoptosis-enhancing nuclease (325 aa).

A Nucleolar localization signal motif is present at residues 27-35; that stretch reads RKRHKRRSR. The tract at residues 53–105 is disordered; the sequence is LSMPPEPGSSPLPTPFGAVTATEDASSGKQCPRAGSGGAPCSRRPAPGKASGP. The segment covering 56–66 has biased composition (pro residues); the sequence is PPEPGSSPLPT. The Exonuclease domain maps to 110–266; that stretch reads CVAIDCEMVG…EDATTAMELY (157 aa). The short motif at 165 to 188 is the Nuclear localization signal element; that stretch reads RQHMCKAIPFQVAQKEILKLLKGK. A disordered region spans residues 281–325; the sequence is LWTCPEDREPDSSTDMEQYMEDQYWPDDLAHGSRGGAREAQDRRN. The span at 308-325 shows a compositional bias: basic and acidic residues; that stretch reads DLAHGSRGGAREAQDRRN.

It localises to the nucleus. Its subcellular location is the nucleolus. Functionally, exonuclease with activity against single- and double-stranded DNA and RNA. Mediates p53-induced apoptosis. When induced by p53 following DNA damage, digests double-stranded DNA to form single-stranded DNA and amplifies DNA damage signals, leading to enhancement of apoptosis. The protein is Apoptosis-enhancing nuclease (AEN) of Pongo abelii (Sumatran orangutan).